A 524-amino-acid chain; its full sequence is Probable glutamyl-tRNA reductase 3, chloroplastic (524 aa).

Residues 1-52 (MAVSNASVVLSPNLETSSSWYHHNPSSSLDLIRIHTLPMNKMTRRGLIQRVR) constitute a chloroplast transit peptide. Substrate is bound by residues 129–132 (TCNR), S189, 194–196 (ENQ), and Q200. C130 serves as the catalytic Nucleophile. An NADP(+)-binding site is contributed by 269-274 (GAGEMG).

It belongs to the glutamyl-tRNA reductase family.

The protein localises to the plastid. The protein resides in the chloroplast. It carries out the reaction (S)-4-amino-5-oxopentanoate + tRNA(Glu) + NADP(+) = L-glutamyl-tRNA(Glu) + NADPH + H(+). Its pathway is porphyrin-containing compound metabolism; protoporphyrin-IX biosynthesis; 5-aminolevulinate from L-glutamyl-tRNA(Glu): step 1/2. It participates in porphyrin-containing compound metabolism; chlorophyll biosynthesis. Its function is as follows. Catalyzes the NADPH-dependent reduction of glutamyl-tRNA(Glu) to glutamate 1-semialdehyde (GSA). The chain is Probable glutamyl-tRNA reductase 3, chloroplastic (HEMA3) from Arabidopsis thaliana (Mouse-ear cress).